The sequence spans 85 residues: U4-theraphotoxin-Hhn1a (85 aa).

The N-terminal stretch at 1–22 (MKVTLIAILTCAAVLVLHTTAA) is a signal peptide. The propeptide occupies 23–48 (EELEAESQLMEVGMPDTELAAVDEER). Disulfide bonds link Cys52–Cys66, Cys56–Cys77, and Cys71–Cys82.

The protein belongs to the neurotoxin 12 (Hwtx-2) family. 02 (Hwtx-2) subfamily. In terms of assembly, monomer. Expressed by the venom gland.

The protein resides in the secreted. Neurotoxin active on both insects and mammals. This is U4-theraphotoxin-Hhn1a from Cyriopagopus hainanus (Chinese bird spider).